Reading from the N-terminus, the 331-residue chain is Small ribosomal subunit protein uS2 (331 aa).

Belongs to the universal ribosomal protein uS2 family.

In Bradyrhizobium diazoefficiens (strain JCM 10833 / BCRC 13528 / IAM 13628 / NBRC 14792 / USDA 110), this protein is Small ribosomal subunit protein uS2.